The sequence spans 883 residues: Copper-transporting ATPase PAA2, chloroplastic (883 aa).

Residues 1-65 (MASNLLRFPL…TQSFESTESS (65 aa)) constitute a chloroplast transit peptide. In terms of domain architecture, HMA spans 76-146 (TPILLDVSGM…RLTESGFEAK (71 aa)). Cu cation-binding residues include cysteine 87 and cysteine 90. 6 helical membrane passes run 179 to 199 (VAFA…HILH), 209 to 229 (GIWD…GALL), 250 to 270 (MNSL…ISLV), 274 to 294 (LEWD…VLLG), 445 to 465 (AIAG…FAFW), and 499 to 519 (VLVV…ILIG). The active-site 4-aspartylphosphate intermediate is the aspartate 548. 761 to 768 (GDGINDAP) lines the ATP pocket. Mg(2+) is bound by residues aspartate 762 and aspartate 766. A run of 2 helical transmembrane segments spans residues 822 to 842 (LAWA…VLLP) and 846 to 866 (FAMT…FVVS).

Belongs to the cation transport ATPase (P-type) (TC 3.A.3) family. Type IB subfamily. In terms of tissue distribution, expressed in the shoots only and not in the roots.

The protein resides in the plastid. Its subcellular location is the chloroplast thylakoid membrane. The enzyme catalyses Cu(2+)(in) + ATP + H2O = Cu(2+)(out) + ADP + phosphate + H(+). Its function is as follows. Mediates copper transfer across the chloroplast thylakoid membrane. Required for copper delivery into the thylakoids lumen, which is essential for the function of copper proteins. The chain is Copper-transporting ATPase PAA2, chloroplastic (PAA2) from Arabidopsis thaliana (Mouse-ear cress).